Reading from the N-terminus, the 130-residue chain is Small ribosomal subunit protein uS9 (130 aa).

It belongs to the universal ribosomal protein uS9 family.

The protein is Small ribosomal subunit protein uS9 of Mycoplasmoides gallisepticum (strain R(low / passage 15 / clone 2)) (Mycoplasma gallisepticum).